The chain runs to 470 residues: N amino acid transport system protein (470 aa).

The segment covering 1-11 (MDSQYETKKND) has biased composition (basic and acidic residues). The interval 1 to 21 (MDSQYETKKNDPNAIMPYPES) is disordered. Over 1–56 (MDSQYETKKNDPNAIMPYPESNDEHVGEVRGLGGGIMDKEPEAQEGHAKFHRLGWK) the chain is Extracellular. A run of 2 helical transmembrane segments spans residues 57–77 (RLTV…LPGA) and 78–98 (FATL…LICI). Residues 99-131 (YTAHVIGQTKLKHPEIAHYADVGRVMFGRWGYE) are Extracellular-facing. A helical transmembrane segment spans residues 132–152 (IISFMFVLQLIFIVGSHVLTG). The Cytoplasmic segment spans residues 153-168 (TIMWGTITDNGNGTCS). Helical transmembrane passes span 169–189 (LVFG…PSFA) and 191–211 (VAIL…ITMI). Topologically, residues 212–236 (ATGIRSSHQEGGLAAVPWSCWPKED) are cytoplasmic. The helical transmembrane segment at 237–257 (LSLAEGFIAVSNIVFAYSFAM) threads the bilayer. Residues 258-275 (CQFSFMDEMHTPSDYKKS) lie on the Extracellular side of the membrane. Residues 276–296 (IVALGLIEIFIYTVTGGVVYA) form a helical membrane-spanning segment. The Cytoplasmic portion of the chain corresponds to 297–316 (FVGPEVQSPALLSAGPLLAK). A helical transmembrane segment spans residues 317-337 (VAFGIALPVIFISGSINTVVV). Residues 338-357 (SRYLIERIWPNNVIRYVNTP) lie on the Extracellular side of the membrane. Residues 358–378 (AGWMVWLGFDFGITLIAWVIA) form a helical membrane-spanning segment. At 379–386 (EAIPFFSD) the chain is on the cytoplasmic side. Residues 387–407 (LLAICSALFISGFSFYFPALM) form a helical membrane-spanning segment. The Extracellular portion of the chain corresponds to 408–427 (YFKITRNDAKSQGKKYFLDA). Residues 428–448 (LNMLCFVIGMGILGIGTYAAI) traverse the membrane as a helical segment. The Cytoplasmic segment spans residues 449-470 (QDIMDRYDHGKVSKPYSCAPLA).

It belongs to the amino acid/polyamine transporter 2 family.

The protein localises to the membrane. Required for the transport of neutral aliphatic and aromatic amino acids via the N system. The protein is N amino acid transport system protein (mtr) of Neurospora crassa (strain ATCC 24698 / 74-OR23-1A / CBS 708.71 / DSM 1257 / FGSC 987).